The chain runs to 118 residues: Autophagy-related protein 8 (118 aa).

Residue G116 is the site of Phosphatidylethanolamine amidated glycine attachment. A propeptide spans 117–118 (SI) (removed in mature form).

This sequence belongs to the ATG8 family. In terms of assembly, conjugation to phosphatidylethanolamine (PE) leads to homodimerization. Interacts with ATG1, ATG3, ATG4, ATG7 and ATG12. Post-translationally, the C-terminal Ser-117 and Ile-118 residues of ATG8 are removed by ATG4 to expose Gly-116 at the C-terminus. This Gly-116 forms then a thioester bond with ATG7 (E1-like activating enzyme) before being transferred to ATG3 (the specific E2 conjugating enzyme), in order to be finally amidated with phosphatidylethanolamine. This lipid modification anchors ATG8 to membranes and can be reversed by ATG4, releasing soluble ATG8.

The protein resides in the cytoplasmic vesicle. It localises to the cvt vesicle membrane. The protein localises to the autophagosome membrane. Its subcellular location is the vacuole membrane. Its function is as follows. Ubiquitin-like modifier involved in cytoplasm to vacuole transport (Cvt) vesicles and autophagosome formation. With ATG4, mediates the delivery of the vesicles and autophagosomes to the vacuole via the microtubule cytoskeleton. Required for selective autophagic degradation of the nucleus (nucleophagy) as well as for mitophagy which contributes to regulate mitochondrial quantity and quality by eliminating the mitochondria to a basal level to fulfill cellular energy requirements and preventing excess ROS production. Also participates in membrane fusion events that take place in the early secretory pathway. Also involved in endoplasmic reticulum-specific autophagic process and is essential for the survival of cells subjected to severe ER stress. The ATG8-PE conjugate mediates tethering between adjacent membranes and stimulates membrane hemifusion, leading to expansion of the autophagosomal membrane during autophagy. Moreover not only conjugation, but also subsequent ATG8-PE deconjugation is an important step required to facilitate multiple events during macroautophagy, and especially for efficient autophagosome biogenesis, the assembly of ATG9-containing tubulovesicular clusters into phagophores/autophagosomes, and for the disassembly of PAS-associated ATG components. Contributes to conidiation by regulating the conidial levels of the conidiation-related protein CP15 and mediates fungal oxidation resistance by controlling total superoxide dismutase (SOD) activity. The polypeptide is Autophagy-related protein 8 (Beauveria bassiana (strain ARSEF 2860) (White muscardine disease fungus)).